Reading from the N-terminus, the 193-residue chain is AP-3 complex subunit sigma-2 (193 aa).

This sequence belongs to the adaptor complexes small subunit family. As to quaternary structure, adaptor protein complex 3 (AP-3) is a heterotetramer composed of two large adaptins (delta-type subunit AP3D1 and beta-type subunit AP3B1 or AP3B2), a medium adaptin (mu-type subunit AP3M1 or AP3M2) and a small adaptin (sigma-type subunit APS1 or AP3S2). Interacts with AGAP1. AP-3 associates with the BLOC-1 complex.

It is found in the golgi apparatus. Its subcellular location is the cytoplasmic vesicle membrane. In terms of biological role, part of the AP-3 complex, an adaptor-related complex which is not clathrin-associated. The complex is associated with the Golgi region as well as more peripheral structures. It facilitates the budding of vesicles from the Golgi membrane and may be directly involved in trafficking to lysosomes. In concert with the BLOC-1 complex, AP-3 is required to target cargos into vesicles assembled at cell bodies for delivery into neurites and nerve terminals. This chain is AP-3 complex subunit sigma-2 (AP3S2), found in Bos taurus (Bovine).